The chain runs to 273 residues: NH(3)-dependent NAD(+) synthetase (273 aa).

47–54 (GISGGQDS) lines the ATP pocket. Asp53 serves as a coordination point for Mg(2+). Position 139 (Arg139) interacts with deamido-NAD(+). Thr159 contacts ATP. Residue Glu164 coordinates Mg(2+). Deamido-NAD(+) is bound by residues Lys172 and Asp179. The ATP site is built by Lys188 and Thr210. 259 to 260 (HK) serves as a coordination point for deamido-NAD(+).

Belongs to the NAD synthetase family. In terms of assembly, homodimer.

It carries out the reaction deamido-NAD(+) + NH4(+) + ATP = AMP + diphosphate + NAD(+) + H(+). It functions in the pathway cofactor biosynthesis; NAD(+) biosynthesis; NAD(+) from deamido-NAD(+) (ammonia route): step 1/1. Functionally, catalyzes the ATP-dependent amidation of deamido-NAD to form NAD. Uses ammonia as a nitrogen source. The protein is NH(3)-dependent NAD(+) synthetase of Staphylococcus aureus (strain COL).